Reading from the N-terminus, the 704-residue chain is MFPHEEKLIREKLGREPNDLEKAMLEVMWSEHVSYKSSRKWLKLLPTKNEHVILGPGEDAGIIKFDDKTWIVIGIESHNHPSAVEPYGGAATGVGGIVRDILCMGARPIALLDPIRFGPLEKEKNRYLFEYVVKGIADYGNRIGVPTVGGETEFDESLDNYTLVNVACIGIMRPEHLVHSYVTEPGLKLVIVGNRTGRDGIHGVTFASEELGENAEEEDRSAVQIPDPFTEKLLIEATLEAVYTGKVKALKDLGGGGLTCAASEMVGKRGFGAIIYADKVPLREPGMTPLEVMISESQERMLFAIKPEDVEELGKIFEKYELEWSVVGEVIEEPKFIVYWKGRKVAELPIELLTNVPTIEWPMKEYRIEEDVETPQISLEEAFEKVWRSPNVISKRWVWEQYDHEVQGRTVIKPGFDSAVLKINEEYGLAITADGNPTHCYLNPYHGAMGVVVEVVRNLVSVGAKPLALVDNLNFASPERPEVYWSFVETIKGLADAAKAFGLAYVSGNVSFYNEVVNKPVKPTPVVAGVGKVKLEKIPRGPREGDLIGLIGETRKELGGSELYRVLGVSKGIAPRVDLEVEKRNAESVLKLIEEGLVSFVHDVSRGGVAVALAELSTWFNVGIKSEITTSLLPLDFAFSESHGRYIVTFPEENLEAVKKIAPITLLGRIGGEKFELKINGEKVSKTVKWLSDVHWNELYRIMD.

Residue His32 is part of the active site. Tyr35 contacts ATP. Glu76 is a binding site for Mg(2+). Substrate-binding positions include 77–80 (SHNH) and Arg99. The active-site Proton acceptor is His78. Asp100 is a Mg(2+) binding site. Residue Gln224 participates in substrate binding. Residue Asp252 coordinates Mg(2+). Residue 296-298 (ESQ) coordinates substrate. Positions 471 and 508 each coordinate ATP. A Mg(2+)-binding site is contributed by Asn509. Ser511 provides a ligand contact to substrate.

It belongs to the FGAMS family. In terms of assembly, monomer. Part of the FGAM synthase complex composed of 1 PurL, 1 PurQ and 2 PurS subunits.

It localises to the cytoplasm. It catalyses the reaction N(2)-formyl-N(1)-(5-phospho-beta-D-ribosyl)glycinamide + L-glutamine + ATP + H2O = 2-formamido-N(1)-(5-O-phospho-beta-D-ribosyl)acetamidine + L-glutamate + ADP + phosphate + H(+). The protein operates within purine metabolism; IMP biosynthesis via de novo pathway; 5-amino-1-(5-phospho-D-ribosyl)imidazole from N(2)-formyl-N(1)-(5-phospho-D-ribosyl)glycinamide: step 1/2. In terms of biological role, part of the phosphoribosylformylglycinamidine synthase complex involved in the purines biosynthetic pathway. Catalyzes the ATP-dependent conversion of formylglycinamide ribonucleotide (FGAR) and glutamine to yield formylglycinamidine ribonucleotide (FGAM) and glutamate. The FGAM synthase complex is composed of three subunits. PurQ produces an ammonia molecule by converting glutamine to glutamate. PurL transfers the ammonia molecule to FGAR to form FGAM in an ATP-dependent manner. PurS interacts with PurQ and PurL and is thought to assist in the transfer of the ammonia molecule from PurQ to PurL. The protein is Phosphoribosylformylglycinamidine synthase subunit PurL of Pyrococcus furiosus (strain ATCC 43587 / DSM 3638 / JCM 8422 / Vc1).